Here is a 910-residue protein sequence, read N- to C-terminus: Dimethylsulfide dehydrogenase subunit alpha (910 aa).

The tat-type signal signal peptide spans 1 to 28 (MLRTTRRTLMQGASLVGAGLFAAGRGWA). Residues 59 to 123 (DYVGKAAHCI…IHSTSMYEAD (65 aa)) form the 4Fe-4S Mo/W bis-MGD-type domain. Residues H66, C70, C74, and C109 each contribute to the [4Fe-4S] cluster site.

The protein belongs to the prokaryotic molybdopterin-containing oxidoreductase family. In terms of assembly, heterotrimer of alpha, beta and gamma subunits. The cofactor is [4Fe-4S] cluster. Requires Mo-bis(molybdopterin guanine dinucleotide) as cofactor. In terms of processing, predicted to be exported by the Tat system. The position of the signal peptide cleavage has been experimentally proven.

The protein resides in the periplasm. The enzyme catalyses 2 Fe(III)-[cytochrome c2] + dimethyl sulfide + H2O = 2 Fe(II)-[cytochrome c2] + dimethyl sulfoxide + 2 H(+). Functionally, allows photoautotrophic growth on dimethyl sulfide (DMS) as the sole electron donor. In Rhodovulum sulfidophilum (Rhodobacter sulfidophilus), this protein is Dimethylsulfide dehydrogenase subunit alpha (ddhA).